The primary structure comprises 399 residues: Tyrosine--tRNA ligase (399 aa).

Residues 42–51 (PTAPDLHLGH) carry the 'HIGH' region motif. The 'KMSKS' region motif lies at 226-230 (KMSKS). ATP is bound at residue Lys-229. One can recognise an S4 RNA-binding domain in the interval 337 to 398 (IAIANLLKDA…GKRKFARITV (62 aa)).

This sequence belongs to the class-I aminoacyl-tRNA synthetase family. TyrS type 2 subfamily. As to quaternary structure, homodimer.

It is found in the cytoplasm. The enzyme catalyses tRNA(Tyr) + L-tyrosine + ATP = L-tyrosyl-tRNA(Tyr) + AMP + diphosphate + H(+). Its function is as follows. Catalyzes the attachment of tyrosine to tRNA(Tyr) in a two-step reaction: tyrosine is first activated by ATP to form Tyr-AMP and then transferred to the acceptor end of tRNA(Tyr). The protein is Tyrosine--tRNA ligase of Colwellia psychrerythraea (strain 34H / ATCC BAA-681) (Vibrio psychroerythus).